The sequence spans 303 residues: Acetylglutamate kinase (303 aa).

Residues 67–68 (GG), Arg-89, and Asn-193 each bind substrate.

It belongs to the acetylglutamate kinase family. ArgB subfamily.

It localises to the cytoplasm. It carries out the reaction N-acetyl-L-glutamate + ATP = N-acetyl-L-glutamyl 5-phosphate + ADP. It participates in amino-acid biosynthesis; L-arginine biosynthesis; N(2)-acetyl-L-ornithine from L-glutamate: step 2/4. Functionally, catalyzes the ATP-dependent phosphorylation of N-acetyl-L-glutamate. This chain is Acetylglutamate kinase, found in Acinetobacter baylyi (strain ATCC 33305 / BD413 / ADP1).